The primary structure comprises 263 residues: Auxin-responsive protein IAA3 (263 aa).

2 disordered regions span residues 1 to 54 and 76 to 121; these read MSPP…RRPA and RVFP…PAAK. Positions 28 to 38 are enriched in basic and acidic residues; the sequence is RADDVDLKGTE. Positions 39-43 match the EAR-like (transcriptional repression) motif; it reads LRLGL. The 88-residue stretch at 158 to 245 folds into the PB1 domain; that stretch reads FLYVKVSMDG…SCRRLRIMKG (88 aa).

This sequence belongs to the Aux/IAA family. As to quaternary structure, homodimers and heterodimers. Highly expressed in flowers. Expressed in roots and shoots.

It localises to the nucleus. Functionally, aux/IAA proteins are short-lived transcriptional factors that function as repressors of early auxin response genes at low auxin concentrations. This chain is Auxin-responsive protein IAA3 (IAA3), found in Oryza sativa subsp. japonica (Rice).